Reading from the N-terminus, the 190-residue chain is 3-isopropylmalate dehydratase small subunit (190 aa).

Belongs to the LeuD family. LeuD type 1 subfamily. As to quaternary structure, heterodimer of LeuC and LeuD.

It catalyses the reaction (2R,3S)-3-isopropylmalate = (2S)-2-isopropylmalate. The protein operates within amino-acid biosynthesis; L-leucine biosynthesis; L-leucine from 3-methyl-2-oxobutanoate: step 2/4. In terms of biological role, catalyzes the isomerization between 2-isopropylmalate and 3-isopropylmalate, via the formation of 2-isopropylmaleate. The polypeptide is 3-isopropylmalate dehydratase small subunit (Staphylococcus aureus (strain MRSA252)).